A 427-amino-acid chain; its full sequence is Lupus La protein homolog B (427 aa).

Positions 6–98 (DKEQLDLDTK…RRSPAKPLPE (93 aa)) constitute an HTH La-type RNA-binding domain. Positions 110 to 202 (RSVYIKGFPT…EERKLNKSEE (93 aa)) constitute an RRM domain. Disordered stretches follow at residues 193–220 (EERK…AEDA) and 319–427 (EGKQ…VGDQ). One can recognise a xRRM domain in the interval 226 to 348 (EERVGCLLKF…KGRGGKGNDS (123 aa)). The Nuclear localization signal motif lies at 315-331 (KKIMEGKQESFNKRKGR). Composition is skewed to basic residues over residues 327 to 342 (KRKG…KGRG) and 351 to 360 (RKKIQFQGKK). Positions 365-376 (SSDDEDDMEESE) are enriched in acidic residues. The span at 405–427 (RALDDKAEDGPAVKQSKTEVGDQ) shows a compositional bias: basic and acidic residues.

Phosphorylated.

It is found in the nucleus. Its function is as follows. La protein plays a role in the transcription of RNA polymerase III. It is most probably a transcription termination factor. Binds to the 3' termini of virtually all nascent polymerase III transcripts. In Xenopus laevis (African clawed frog), this protein is Lupus La protein homolog B (ssb-b).